The sequence spans 222 residues: Ribosomal RNA large subunit methyltransferase E (222 aa).

Residues Gly-64, Trp-66, Asp-92, Asp-108, and Asp-133 each contribute to the S-adenosyl-L-methionine site. The Proton acceptor role is filled by Lys-173.

Belongs to the class I-like SAM-binding methyltransferase superfamily. RNA methyltransferase RlmE family.

The protein localises to the cytoplasm. It carries out the reaction uridine(2552) in 23S rRNA + S-adenosyl-L-methionine = 2'-O-methyluridine(2552) in 23S rRNA + S-adenosyl-L-homocysteine + H(+). Functionally, specifically methylates the uridine in position 2552 of 23S rRNA at the 2'-O position of the ribose in the fully assembled 50S ribosomal subunit. The sequence is that of Ribosomal RNA large subunit methyltransferase E from Variovorax paradoxus (strain S110).